A 273-amino-acid polypeptide reads, in one-letter code: MPELPEVETVRKGLERLVVNQEIASITIKVPKMVKTDLNDFMISLPGKTIQQVLRRGKYLLFDFGEMVMVSHLRMEGKYLLFPNKVPDNKHFHLYFKLTNGSTLVYQDVRKFGTFELVRKSSLKDYFTQKKLGPEPTADTFQFEPFSKGLANSKKPIKPLLLDQRLVAGLGNIYVDEVLWAAKIHPQRLANQLTESETSLLHKEIIRILTLGIEKGGSTIRTYKNALGEDGTMQKYLQVYGKTGQPCPRCGCLIKKIKVGGRGTHYCPRCQCL.

The active-site Schiff-base intermediate with DNA is the P2. E3 serves as the catalytic Proton donor. The active-site Proton donor; for beta-elimination activity is the K58. 2 residues coordinate DNA: H91 and R110. The FPG-type zinc-finger motif lies at 238-272 (QVYGKTGQPCPRCGCLIKKIKVGGRGTHYCPRCQC). Catalysis depends on R262, which acts as the Proton donor; for delta-elimination activity.

The protein belongs to the FPG family. As to quaternary structure, monomer. Zn(2+) serves as cofactor.

The catalysed reaction is Hydrolysis of DNA containing ring-opened 7-methylguanine residues, releasing 2,6-diamino-4-hydroxy-5-(N-methyl)formamidopyrimidine.. It carries out the reaction 2'-deoxyribonucleotide-(2'-deoxyribose 5'-phosphate)-2'-deoxyribonucleotide-DNA = a 3'-end 2'-deoxyribonucleotide-(2,3-dehydro-2,3-deoxyribose 5'-phosphate)-DNA + a 5'-end 5'-phospho-2'-deoxyribonucleoside-DNA + H(+). In terms of biological role, involved in base excision repair of DNA damaged by oxidation or by mutagenic agents. Acts as a DNA glycosylase that recognizes and removes damaged bases. Has a preference for oxidized purines, such as 7,8-dihydro-8-oxoguanine (8-oxoG). Has AP (apurinic/apyrimidinic) lyase activity and introduces nicks in the DNA strand. Cleaves the DNA backbone by beta-delta elimination to generate a single-strand break at the site of the removed base with both 3'- and 5'-phosphates. This chain is Formamidopyrimidine-DNA glycosylase, found in Streptococcus agalactiae serotype Ia (strain ATCC 27591 / A909 / CDC SS700).